A 341-amino-acid polypeptide reads, in one-letter code: Cathepsin B-like cysteine proteinase 1 (341 aa).

The N-terminal stretch at 1–19 is a signal peptide; the sequence is MKYLFFALCLYLYQGISEA. A propeptide spans 20 to 88 (activation peptide); sequence EVPAEQIPLE…VEDEELEENN (69 aa). A glycan (N-linked (GlcNAc...) asparagine) is linked at N103. 6 cysteine pairs are disulfide-bonded: C104/C133, C116/C160, C152/C218, C153/C156, C189/C222, and C197/C209. The active site involves C119. N-linked (GlcNAc...) asparagine glycosylation occurs at N202. Catalysis depends on residues H288 and N308.

This sequence belongs to the peptidase C1 family.

Functionally, expression of the protease correlates with blood-feeding and suggests a role for the protease in blood digestion. The protein is Cathepsin B-like cysteine proteinase 1 (CP-1) of Ostertagia ostertagi (Brown stomach worm).